The chain runs to 62 residues: Large ribosomal subunit protein bL28 (62 aa).

This sequence belongs to the bacterial ribosomal protein bL28 family.

In Halalkalibacterium halodurans (strain ATCC BAA-125 / DSM 18197 / FERM 7344 / JCM 9153 / C-125) (Bacillus halodurans), this protein is Large ribosomal subunit protein bL28.